We begin with the raw amino-acid sequence, 275 residues long: Interleukin-2 receptor subunit alpha (275 aa).

An N-terminal signal peptide occupies residues 1–21; that stretch reads MEPSLLMWRFFVFIVVPGCVT. Residues 22-81 form the Sushi 1 domain; the sequence is EACHDDPPSLRNAMFKVFRYEVGTMINCDCKTGFRRVSAVMRCVGDSSHSAWENRCFCNS. Over 22-243 the chain is Extracellular; sequence EACHDDPPSL…DTFIFTTEYQ (222 aa). Cystine bridges form between Cys24-Cys64, Cys49-Cys77, and Cys51-Cys79. The N-linked (GlcNAc...) asparagine glycan is linked to Asn80. The tract at residues 88 to 130 is disordered; sequence QVKQVTPAPEEHREKKHTDAQNQTQPPEEADLPGHCEEPPPWE. Positions 96 to 106 are enriched in basic and acidic residues; it reads PEEHREKKHTD. An N-linked (GlcNAc...) asparagine glycan is attached at Asn109. The span at 119 to 130 shows a compositional bias: basic and acidic residues; it reads LPGHCEEPPPWE. Positions 121–186 constitute a Sushi 2 domain; the sequence is GHCEEPPPWE…WTRPRLKCIR (66 aa). Intrachain disulfides connect Cys123/Cys168 and Cys152/Cys184. The tract at residues 188-221 is disordered; the sequence is GEHGQASDDAEPQESTEAPPGSGTFLPTRMAGTT. A helical membrane pass occupies residues 244–262; sequence IAVAGCTLLLASILLLSCL. At 263–275 the chain is on the cytoplasmic side; sequence TWQRKWKKNRRTI.

As to quaternary structure, non-covalent dimer of an alpha and a beta subunit. IL2R exists in 3 different forms: a high affinity dimer, an intermediate affinity monomer (beta subunit), and a low affinity monomer (alpha subunit). The high and intermediate affinity forms also associate with a gamma subunit.

It localises to the membrane. Its function is as follows. Receptor for interleukin-2. The receptor is involved in the regulation of immune tolerance by controlling regulatory T cells (TREGs) activity. TREGs suppress the activation and expansion of autoreactive T-cells. In Bos taurus (Bovine), this protein is Interleukin-2 receptor subunit alpha (IL2RA).